A 313-amino-acid chain; its full sequence is Ribosomal RNA small subunit methyltransferase H (313 aa).

Residues 35 to 37, D55, F80, D102, and Q109 each bind S-adenosyl-L-methionine; that span reads GGH.

The protein belongs to the methyltransferase superfamily. RsmH family.

The protein localises to the cytoplasm. The catalysed reaction is cytidine(1402) in 16S rRNA + S-adenosyl-L-methionine = N(4)-methylcytidine(1402) in 16S rRNA + S-adenosyl-L-homocysteine + H(+). Functionally, specifically methylates the N4 position of cytidine in position 1402 (C1402) of 16S rRNA. This Shewanella oneidensis (strain ATCC 700550 / JCM 31522 / CIP 106686 / LMG 19005 / NCIMB 14063 / MR-1) protein is Ribosomal RNA small subunit methyltransferase H.